A 2555-amino-acid polypeptide reads, in one-letter code: Squalestatin hexaketide synthase clz14 (2555 aa).

The disordered stretch occupies residues 1–84; sequence MDVSKEAGHH…PNATSTTTTT (84 aa). Over residues 10–84 the composition is skewed to low complexity; that stretch reads HANGFANGNT…PNATSTTTTT (75 aa). In terms of domain architecture, Ketosynthase family 3 (KS3) spans 91–511; that stretch reads QVPVAICGIG…GSNTHIIIDS (421 aa). Residues C261, H398, and H435 each act as for beta-ketoacyl synthase activity in the active site. Residues 611–928 are malonyl-CoA:ACP transacylase (MAT) domain; that stretch reads FIFTGQGAQW…LEGIGKLFCF (318 aa). The interval 975–1104 is N-terminal hotdog fold; sequence HELLGERSLE…GLVTASVVTS (130 aa). Residues 975-1256 form a dehydratase (DH) domain region; the sequence is HELLGERSLE…RGFKCKKTDD (282 aa). One can recognise a PKS/mFAS DH domain in the interval 975–1260; sequence HELLGERSLE…CKKTDDAFIQ (286 aa). The active-site Proton acceptor; for dehydratase activity is H1007. The segment at 1117–1260 is C-terminal hotdog fold; sequence SRKVDTSRWY…CKKTDDAFIQ (144 aa). D1177 (proton donor; for dehydratase activity) is an active-site residue. The methyltransferase (CMet) domain stretch occupies residues 1424–1595; sequence SFFQAAGLNK…GFEGAGTVVL (172 aa). The tract at residues 1821-2141 is enoyl reductase (ER) (ER) domain; that stretch reads GMLNTLHWVG…RGVHMGRIVV (321 aa). A ketoreductase (KR) domain region spans residues 2165 to 2338; the sequence is STYLLTGGMG…PASVIDIAAI (174 aa). The Carrier domain occupies 2468-2546; sequence IIFAQEIAKR…SLGRLATKRL (79 aa). S2505 is subject to O-(pantetheine 4'-phosphoryl)serine.

It functions in the pathway secondary metabolite biosynthesis. In terms of biological role, highly reducing polyketide synthase (HR-PKS); part of the gene cluster that mediates the biosynthesis of squalestatin S1 (SQS1, also known as zaragozic acid A), a heavily oxidized fungal polyketide that offers potent cholesterol lowering activity by targeting squalene synthase (SS). SQS1 is composed of a 2,8-dioxobicyclic[3.2.1]octane-3,4,5-tricarboxyclic acid core that is connected to two lipophilic polyketide arms. These initial steps feature the priming of an unusual benzoic acid starter unit onto the highly reducing polyketide synthase clz14, followed by oxaloacetate extension and product release to generate a tricarboxylic acid containing product. The phenylalanine ammonia lyase (PAL) clz10 and the acyl-CoA ligase clz12 are involved in transforming phenylalanine into benzoyl-CoA. The citrate synthase-like protein clz17 is involved in connecting the C-alpha-carbons of the hexaketide chain and oxaloacetate to afford the tricarboxylic acid unit. The potential hydrolytic enzymes, clz11 and clz13, are in close proximity to pks2 and may participate in product release. On the other side, the tetraketide arm is synthesized by a the squalestatin tetraketide synthase clz2 and enzymatically esterified to the core in the last biosynthetic step, by the acetyltransferase clz6. The biosynthesis of the tetraketide must involve 3 rounds of chain extension. After the first and second rounds methyl-transfer occurs, and in all rounds of extension the ketoreductase and dehydratase are active. The enoyl reductase and C-MeT of clz2 are not active in the final round of extension. The acetyltransferase clz6 appears to have a broad substrate selectivity for its acyl CoA substrate, allowing the in vitro synthesis of novel squalestatins. The biosynthesis of SQS1 requires several oxidative steps likely performed by oxidoreductases clz3, clz15 and clz16. Finally, in support of the identification of the cluster as being responsible for SQS1 production, the cluster contains a gene encoding a putative squalene synthase (SS) clz20, suggesting a likely mechanism for self-resistance. In Cochliobolus lunatus (Filamentous fungus), this protein is Squalestatin hexaketide synthase clz14.